Reading from the N-terminus, the 408-residue chain is Argininosuccinate synthase (408 aa).

ATP-binding positions include Ala10–Ser18 and Ala37. Residues Tyr90 and Ser95 each contribute to the L-citrulline site. Gly120 contacts ATP. L-aspartate is bound by residues Thr122, Asn126, and Asp127. Asn126 serves as a coordination point for L-citrulline. Residues Arg130, Ser181, Ser190, Glu266, and Tyr278 each contribute to the L-citrulline site.

This sequence belongs to the argininosuccinate synthase family. Type 1 subfamily. As to quaternary structure, homotetramer.

It localises to the cytoplasm. The enzyme catalyses L-citrulline + L-aspartate + ATP = 2-(N(omega)-L-arginino)succinate + AMP + diphosphate + H(+). It functions in the pathway amino-acid biosynthesis; L-arginine biosynthesis; L-arginine from L-ornithine and carbamoyl phosphate: step 2/3. This is Argininosuccinate synthase from Cereibacter sphaeroides (strain ATCC 17025 / ATH 2.4.3) (Rhodobacter sphaeroides).